The chain runs to 393 residues: Cysteine protease ATG4B (393 aa).

The residue at position 1 (Met1) is an N-acetylmethionine. Ser34 is subject to Phosphoserine. Catalysis depends on Cys74, which acts as the Nucleophile. Cys189 carries the post-translational modification S-nitrosocysteine. Catalysis depends on residues Asp278 and His280. Residues Cys292 and Cys301 each carry the S-nitrosocysteine modification. Cys292 and Cys361 are oxidised to a cystine. A phosphoserine mark is found at Ser316 and Ser383. Residues 388–391 (FEIL) carry the LIR motif. At Ser392 the chain carries Phosphoserine.

It belongs to the peptidase C54 family. As to quaternary structure, interacts with PFKP; promoting phosphorylation of ATG4B at Ser-34. Interacts with GBP7. Post-translationally, phosphorylation at Ser-383 and Ser-392 promotes autophagy by increasing protein delipidation activity without affecting proteolytic activation of ATG8 proteins. Phosphorylation at Ser-316 by ULK1 inhibits autophagy by decreasing both proteolytic activation and delipidation activities. Phosphorylation at Ser-316 is dephosphorylated by protein phosphatase 2A (PP2A). Phosphorylation at Ser-34 by AKT2 promotes its hydrolase activity, leading to increased proteolytic activation and delipidation of ATG8 family proteins. Phosphorylation at Ser-34 by AKT1 promotes mitochondrial localization and inhibition of the F1F0-ATP synthase activity, leading to elevation of mitochondrial reactive oxygen species (ROS). Ubiquitinated by RNF5, leading to its degradation by the proteasome. In terms of processing, S-nitrosylation at Cys-189 and Cys-292 in response to high glucose decreases both proteolytic activation and delipidation activities. Post-translationally, O-glycosylated by OGT, leading to increase protease activity, thereby promoting the proteolytic activation of ATG8 family proteins. Forms reversible intrachain disulfide bonds in response to oxidative stress. Forms interchain disulfide bonds, leading to formation of homooligomers in response to oxidation.

The protein resides in the cytoplasm. It is found in the cytosol. Its subcellular location is the cytoplasmic vesicle. It localises to the autophagosome. The protein localises to the endoplasmic reticulum. The protein resides in the mitochondrion. It catalyses the reaction [protein]-C-terminal L-amino acid-glycyl-phosphatidylethanolamide + H2O = [protein]-C-terminal L-amino acid-glycine + a 1,2-diacyl-sn-glycero-3-phosphoethanolamine. It carries out the reaction [protein]-C-terminal L-amino acid-glycyl-phosphatidylserine + H2O = [protein]-C-terminal L-amino acid-glycine + a 1,2-diacyl-sn-glycero-3-phospho-L-serine. Its activity is regulated as follows. Inhibited by N-ethylmaleimide. Redox-regulated during autophagy since reducing conditions activate ATG4A whereas an oxidizing environment such as the presence of H(2)O(2) inhibits its activity. The cysteine protease activity compounds is inhibited by styrylquinoline compounds 4-28 and LV-320. In terms of biological role, cysteine protease that plays a key role in autophagy by mediating both proteolytic activation and delipidation of ATG8 family proteins. Required for canonical autophagy (macroautophagy), non-canonical autophagy as well as for mitophagy. The protease activity is required for proteolytic activation of ATG8 family proteins: cleaves the C-terminal amino acid of ATG8 proteins MAP1LC3A, MAP1LC3B, MAP1LC3C, GABARAPL1, GABARAPL2 and GABARAP, to reveal a C-terminal glycine. Exposure of the glycine at the C-terminus is essential for ATG8 proteins conjugation to phosphatidylethanolamine (PE) and insertion to membranes, which is necessary for autophagy. Protease activity is also required to counteract formation of high-molecular weight conjugates of ATG8 proteins (ATG8ylation): acts as a deubiquitinating-like enzyme that removes ATG8 conjugated to other proteins, such as ATG3. In addition to the protease activity, also mediates delipidation of ATG8 family proteins. Catalyzes delipidation of PE-conjugated forms of ATG8 proteins during macroautophagy. Also involved in non-canonical autophagy, a parallel pathway involving conjugation of ATG8 proteins to single membranes at endolysosomal compartments, by catalyzing delipidation of ATG8 proteins conjugated to phosphatidylserine (PS). Compared to other members of the family (ATG4A, ATG4C or ATG4C), constitutes the major protein for proteolytic activation of ATG8 proteins, while it displays weaker delipidation activity than other ATG4 paralogs. Involved in phagophore growth during mitophagy independently of its protease activity and of ATG8 proteins: acts by regulating ATG9A trafficking to mitochondria and promoting phagophore-endoplasmic reticulum contacts during the lipid transfer phase of mitophagy. Its function is as follows. (Microbial infection) Mediates cleavage of an ATG8 protein homolog coded in the genome of cytopathogenic bovine viral diarrhea virus (BVDV). The polypeptide is Cysteine protease ATG4B (ATG4B) (Bos taurus (Bovine)).